The primary structure comprises 792 residues: Probable beta-D-xylosidase 6 (792 aa).

An N-terminal signal peptide occupies residues 1 to 18 (MNLQLTLISLLFFTSAIA). N-linked (GlcNAc...) asparagine glycans are attached at residues asparagine 44, asparagine 104, asparagine 124, and asparagine 239. The active site involves aspartate 309. Residues asparagine 444 and asparagine 618 are each glycosylated (N-linked (GlcNAc...) asparagine).

Belongs to the glycosyl hydrolase 3 family.

Its subcellular location is the secreted. It is found in the extracellular space. The protein localises to the extracellular matrix. The protein is Probable beta-D-xylosidase 6 (BXL6) of Arabidopsis thaliana (Mouse-ear cress).